A 374-amino-acid polypeptide reads, in one-letter code: Tetraacyldisaccharide 4'-kinase (374 aa).

ATP is bound at residue 59–66 (TAGGTGKT).

This sequence belongs to the LpxK family.

The catalysed reaction is a lipid A disaccharide + ATP = a lipid IVA + ADP + H(+). It functions in the pathway glycolipid biosynthesis; lipid IV(A) biosynthesis; lipid IV(A) from (3R)-3-hydroxytetradecanoyl-[acyl-carrier-protein] and UDP-N-acetyl-alpha-D-glucosamine: step 6/6. Functionally, transfers the gamma-phosphate of ATP to the 4'-position of a tetraacyldisaccharide 1-phosphate intermediate (termed DS-1-P) to form tetraacyldisaccharide 1,4'-bis-phosphate (lipid IVA). This chain is Tetraacyldisaccharide 4'-kinase, found in Elusimicrobium minutum (strain Pei191).